A 353-amino-acid polypeptide reads, in one-letter code: Chorismate synthase (353 aa).

NADP(+) is bound by residues Arg48 and Arg54. FMN-binding positions include 125–127 (RSS), 238–239 (NA), Gly278, 293–297 (KPTSS), and Arg319.

This sequence belongs to the chorismate synthase family. Homotetramer. It depends on FMNH2 as a cofactor.

It catalyses the reaction 5-O-(1-carboxyvinyl)-3-phosphoshikimate = chorismate + phosphate. The protein operates within metabolic intermediate biosynthesis; chorismate biosynthesis; chorismate from D-erythrose 4-phosphate and phosphoenolpyruvate: step 7/7. In terms of biological role, catalyzes the anti-1,4-elimination of the C-3 phosphate and the C-6 proR hydrogen from 5-enolpyruvylshikimate-3-phosphate (EPSP) to yield chorismate, which is the branch point compound that serves as the starting substrate for the three terminal pathways of aromatic amino acid biosynthesis. This reaction introduces a second double bond into the aromatic ring system. The protein is Chorismate synthase of Bordetella bronchiseptica (strain ATCC BAA-588 / NCTC 13252 / RB50) (Alcaligenes bronchisepticus).